We begin with the raw amino-acid sequence, 532 residues long: Cyclin-L1 (532 aa).

2 cyclin-like regions span residues 94-196 (ELIQ…RVLK) and 209-293 (KIIV…ETLR). The residue at position 331 (Thr-331) is a Phosphothreonine. The interval 332-532 (PALSTLGGFS…SRSGHGRHRR (201 aa)) is disordered. Residues Ser-341 and Ser-344 each carry the phosphoserine modification. Glycyl lysine isopeptide (Lys-Gly) (interchain with G-Cter in SUMO2) cross-links involve residues Lys-345 and Lys-353. Residues 348–358 (SPREVKAEEKS) show a composition bias toward basic and acidic residues. A phosphoserine mark is found at Ser-358 and Ser-361. The span at 367 to 376 (VKKEPEDRQQ) shows a compositional bias: basic and acidic residues. Residue Lys-368 forms a Glycyl lysine isopeptide (Lys-Gly) (interchain with G-Cter in SUMO2) linkage. Ser-380 bears the Phosphoserine mark. Composition is skewed to basic residues over residues 388-424 (DSKR…RRSR), 444-458 (RRHH…KAKH), 466-482 (SNRH…RSQS), and 492-504 (KKHR…HRDR). The segment at 396–438 (RSASRSRSRTRSRSRSHSPRRHYNNRRSRSGTYSSRSRSRSRS) is RS. Ser-451 carries the post-translational modification Phosphoserine. Basic and acidic residues predominate over residues 505-514 (RERSRSFERS). Residues 515–532 (HKGKHHGGSRSGHGRHRR) show a composition bias toward basic residues.

This sequence belongs to the cyclin family. Cyclin L subfamily. In terms of assembly, interacts with POLR2A via its hyperphosphorylated C-terminal domain (CTD). Interacts with CDK11A, CDK11B, CDK12 and CDK13. May form a ternary complex with CDK11B and casein kinase II (CKII). Interacts with pre-mRNA-splicing factors, including at least SRSF1, SRSF2 and SRSF7/SLU7. Widely expressed (at protein level).

The protein localises to the nucleus speckle. It is found in the nucleus. It localises to the nucleoplasm. The protein resides in the cytoplasm. Its function is as follows. Involved in pre-mRNA splicing. Functions in association with cyclin-dependent kinases (CDKs). May play a role in the regulation of RNA polymerase II (pol II). Inhibited by the CDK-specific inhibitor CDKN1A/p21. This Mus musculus (Mouse) protein is Cyclin-L1 (Ccnl1).